Here is a 347-residue protein sequence, read N- to C-terminus: Protein RecA (347 aa).

64–71 (GPESSGKT) provides a ligand contact to ATP.

This sequence belongs to the RecA family.

It is found in the cytoplasm. Can catalyze the hydrolysis of ATP in the presence of single-stranded DNA, the ATP-dependent uptake of single-stranded DNA by duplex DNA, and the ATP-dependent hybridization of homologous single-stranded DNAs. It interacts with LexA causing its activation and leading to its autocatalytic cleavage. This Bartonella tribocorum (strain CIP 105476 / IBS 506) protein is Protein RecA.